The sequence spans 483 residues: Glutamyl-tRNA(Gln) amidotransferase subunit A (483 aa).

Catalysis depends on charge relay system residues K76 and S151. The Acyl-ester intermediate role is filled by S175.

It belongs to the amidase family. GatA subfamily. In terms of assembly, heterotrimer of A, B and C subunits.

It catalyses the reaction L-glutamyl-tRNA(Gln) + L-glutamine + ATP + H2O = L-glutaminyl-tRNA(Gln) + L-glutamate + ADP + phosphate + H(+). Allows the formation of correctly charged Gln-tRNA(Gln) through the transamidation of misacylated Glu-tRNA(Gln) in organisms which lack glutaminyl-tRNA synthetase. The reaction takes place in the presence of glutamine and ATP through an activated gamma-phospho-Glu-tRNA(Gln). This Azotobacter vinelandii (strain DJ / ATCC BAA-1303) protein is Glutamyl-tRNA(Gln) amidotransferase subunit A.